Consider the following 699-residue polypeptide: Pollen-specific leucine-rich repeat extensin-like protein 4 (699 aa).

Residues 1–39 (MPFYKQPWVFSKVFVLAMAKPPSFGCCFFLLFFSFLSSS) form the signal peptide. N-linked (GlcNAc...) asparagine glycosylation is present at Asn-106. 9 LRR repeats span residues 133–157 (VTVV…LGLM), 158–180 (TDVA…SFEK), 182–205 (KLMH…VLSW), 206–229 (PDVK…LFKK), 231–251 (LDAI…SLGE), 253–275 (PASV…IGNM), 276–299 (KNLN…IGKL), 301–323 (NVTV…FVGL), and 324–347 (TSVE…ICQL). N-linked (GlcNAc...) asparagine glycosylation occurs at Asn-301. N-linked (GlcNAc...) asparagine glycosylation is present at Asn-352. Residues 411 to 699 (KCAGGSSTPS…SPPPPMFAGY (289 aa)) are disordered. 4 stretches are compositionally biased toward pro residues: residues 421-466 (KPSP…PVPT), 482-504 (KPSP…PQPD), 518-659 (PPPA…PPAP), and 690-699 (SPPPPMFAGY). A contains the Ser-Pro(4) repeats region spans residues 517–699 (SPPPAPVNSP…SPPPPMFAGY (183 aa)).

In terms of processing, hydroxylated on proline residues in the S-P-P-P-P repeat. Post-translationally, O-glycosylated on hydroxyprolines. Expressed in flowers, stamen, pollen, and pollinated carpels.

It localises to the secreted. The protein localises to the cell wall. In terms of biological role, modulates cell morphogenesis by regulating cell wall formation and assembly, and/or growth polarization. The sequence is that of Pollen-specific leucine-rich repeat extensin-like protein 4 (PEX4) from Arabidopsis thaliana (Mouse-ear cress).